The sequence spans 188 residues: Ribosome maturation factor RimM (188 aa).

Positions 93 to 175 (QDEFYFTDLI…EIEVQGDLSD (83 aa)) constitute a PRC barrel domain.

It belongs to the RimM family. As to quaternary structure, binds ribosomal protein uS19.

The protein resides in the cytoplasm. In terms of biological role, an accessory protein needed during the final step in the assembly of 30S ribosomal subunit, possibly for assembly of the head region. Essential for efficient processing of 16S rRNA. May be needed both before and after RbfA during the maturation of 16S rRNA. It has affinity for free ribosomal 30S subunits but not for 70S ribosomes. This Gluconacetobacter diazotrophicus (strain ATCC 49037 / DSM 5601 / CCUG 37298 / CIP 103539 / LMG 7603 / PAl5) protein is Ribosome maturation factor RimM.